A 508-amino-acid polypeptide reads, in one-letter code: Aldehyde dehydrogenase family 7 member A1 (508 aa).

244-249 (GSSKVG) is an NAD(+) binding site. The Proton acceptor role is filled by Glu-266. Cys-300 (nucleophile) is an active-site residue.

Belongs to the aldehyde dehydrogenase family. Homotetramer.

It catalyses the reaction an aldehyde + NAD(+) + H2O = a carboxylate + NADH + 2 H(+). May play a role in fruit development. In Malus domestica (Apple), this protein is Aldehyde dehydrogenase family 7 member A1.